Reading from the N-terminus, the 60-residue chain is Protein K12 (60 aa).

The polypeptide is Protein K12 (K12) (Human herpesvirus 8 type P (isolate GK18) (HHV-8)).